The following is a 458-amino-acid chain: Transcription factor Atf1 (458 aa).

A bZIP domain is found at 347-410 (EEKRRNFLER…VNLKTLLLAH (64 aa)). A basic motif region spans residues 349 to 378 (KRRNFLERNRVAALKCRQRKKQWLANLQNK). Positions 389-403 (LTATVTQLREEIVNL) are leucine-zipper.

The protein belongs to the bZIP family.

It localises to the nucleus. Transcription factor that positively regulates vegetative growth, reproduction, and osmotic stress response. This chain is Transcription factor Atf1, found in Penicillium expansum (Blue mold rot fungus).